The chain runs to 487 residues: 3-octaprenyl-4-hydroxybenzoate carboxy-lyase (487 aa).

A Mn(2+)-binding site is contributed by Asn-172. Prenylated FMN contacts are provided by residues 175-177, 189-191, and 194-195; these read IYR, RWL, and RG. Glu-238 lines the Mn(2+) pocket. Residue Asp-287 is the Proton donor of the active site.

The protein belongs to the UbiD family. In terms of assembly, homohexamer. It depends on prenylated FMN as a cofactor. Mn(2+) serves as cofactor.

The protein resides in the cell membrane. It catalyses the reaction a 4-hydroxy-3-(all-trans-polyprenyl)benzoate + H(+) = a 2-(all-trans-polyprenyl)phenol + CO2. It functions in the pathway cofactor biosynthesis; ubiquinone biosynthesis. Its function is as follows. Catalyzes the decarboxylation of 3-octaprenyl-4-hydroxy benzoate to 2-octaprenylphenol, an intermediate step in ubiquinone biosynthesis. The polypeptide is 3-octaprenyl-4-hydroxybenzoate carboxy-lyase (Nitrosomonas europaea (strain ATCC 19718 / CIP 103999 / KCTC 2705 / NBRC 14298)).